Reading from the N-terminus, the 265-residue chain is Signal peptidase I (265 aa).

Over 1-19 (MQIDTKTNTNKTTAQEWKS) the chain is Cytoplasmic. Residues 20–40 (FAFVVCIALLIRILIMEPFTV) form a helical membrane-spanning segment. Topologically, residues 41 to 265 (PTGSMKATIL…IFRNLYNTDE (225 aa)) are periplasmic. Residues S44 and K107 contribute to the active site.

This sequence belongs to the peptidase S26 family.

Its subcellular location is the cell inner membrane. The enzyme catalyses Cleavage of hydrophobic, N-terminal signal or leader sequences from secreted and periplasmic proteins.. This is Signal peptidase I (lepB) from Rickettsia canadensis (strain McKiel).